The primary structure comprises 49 residues: Astexin-2 (49 aa).

Positions 1–25 (MTKRTTIAARRVGLIDLGKATRQTK) are excised as a propeptide. Positions 26 to 34 (GLTQIQALD) form a cross-link, isoaspartyl glycine isopeptide (Gly-Asp).

In terms of processing, this lasso peptide is hydrolyzed to a linear form by the isopeptidase AtxE2, in vitro. The isopeptidase AtxE2 only recognizes the threaded form (but not the unthreaded form).

It localises to the cytoplasm. The protein resides in the secreted. Its function is as follows. Shows weak antimicrobial activity against its phylogenetic relative Caulobacter crescentus. Does not show activity against other bacteria tested (E.coli, Vibrio sp, Burkhoderia thailandensis, and Salmonella newport). The protein is Astexin-2 of Asticcacaulis excentricus (strain ATCC 15261 / DSM 4724 / KCTC 12464 / NCIMB 9791 / VKM B-1370 / CB 48).